The primary structure comprises 43 residues: uncharacterized protein (43 aa).

This is an uncharacterized protein from Escherichia coli (Bacteriophage T4).